Here is a 398-residue protein sequence, read N- to C-terminus: 1,4-beta-D-glucan cellobiohydrolase CEL6C (398 aa).

Residues 1–18 form the signal peptide; that stretch reads MKITSSAAALALVASAVA. N-linked (GlcNAc...) asparagine glycosylation occurs at asparagine 70. The active site involves aspartate 125. Aspartate 170 (proton donor) is an active-site residue. Tryptophan 218, tryptophan 318, lysine 346, and glutamate 350 together coordinate substrate.

This sequence belongs to the glycosyl hydrolase 6 (cellulase B) family. Both N- and O-glycosylated.

Its subcellular location is the secreted. It carries out the reaction Hydrolysis of (1-&gt;4)-beta-D-glucosidic linkages in cellulose and cellotetraose, releasing cellobiose from the non-reducing ends of the chains.. Exoglucanase that plays an important function in biomass degradation by catalyzing the hydrolysis of the non-reducing end beta-1,4-glucosidic linkages in cellulose and cellotetraose to release cellobiose. Hydrolyzes crystalline and amorphous cellulose but is inactive on hydroxyethyl cellulose, mannan, galactomannan, xyloglucan, arabinoxylan, arabinan, xylan, and pectin. The protein is 1,4-beta-D-glucan cellobiohydrolase CEL6C of Podospora anserina (strain S / ATCC MYA-4624 / DSM 980 / FGSC 10383) (Pleurage anserina).